A 266-amino-acid polypeptide reads, in one-letter code: Beta-lactamase OXA-11 (266 aa).

The signal sequence occupies residues 1–20 (MKTFAAYVIIACLSSTALAG). Ser-67 (acyl-ester intermediate) is an active-site residue. Lys-70 is modified (N6-carboxylysine). Position 205–207 (205–207 (KTG)) interacts with substrate.

Belongs to the class-D beta-lactamase family.

The enzyme catalyses a beta-lactam + H2O = a substituted beta-amino acid. Functionally, hydrolyzes carbenicillin, oxacillin and cephalosporin. Does not hydrolyze cefoxitin or carbapenems. The polypeptide is Beta-lactamase OXA-11 (bla) (Pseudomonas aeruginosa).